A 376-amino-acid chain; its full sequence is Protein STRICTOSIDINE SYNTHASE-LIKE 2 (376 aa).

The N-terminal stretch at 1–23 (MMKLLLVVATSVALIFSVTDLSG) is a signal peptide. 2 N-linked (GlcNAc...) asparagine glycosylation sites follow: Asn-79 and Asn-244.

It belongs to the strictosidine synthase family.

The protein resides in the vacuole. This Arabidopsis thaliana (Mouse-ear cress) protein is Protein STRICTOSIDINE SYNTHASE-LIKE 2.